Reading from the N-terminus, the 1492-residue chain is ATP-binding cassette sub-family C member 10 (1492 aa).

9 consecutive transmembrane segments (helical) span residues 32–52, 70–90, 102–122, 133–153, 172–192, 293–313, 320–340, 391–411, and 414–434; these read LVLS…YLGT, LAAS…VALP, VLAG…LWVL, PLAL…TVLW, LCLL…WAAP, LVGT…VGFL, LSHG…GAVL, LLNF…LAIT, and LLYQ…LLLV. The 279-residue stretch at 285 to 563 folds into the ABC transmembrane type-1 1 domain; the sequence is YLALGLLKLV…FPWVINGLLE (279 aa). Threonine 463 is modified (phosphothreonine). Serine 467 bears the Phosphoserine mark. Helical transmembrane passes span 507–527 and 538–558; these read VYLW…TYVL and FTAL…PWVI. One can recognise an ABC transporter 1 domain in the interval 598–824; sequence LELHGALFSW…VQAVPKAWAE (227 aa). 633 to 640 is a binding site for ATP; the sequence is GKVGCGKS. The tract at residues 825–860 is disordered; it reads NGQESDSATAQSVQNPEKTKEGLEEEQSTSGRLLQE. Polar residues predominate over residues 826–840; sequence GQESDSATAQSVQNP. 6 consecutive transmembrane segments (helical) span residues 875–895, 933–953, 974–994, 1051–1071, 1153–1173, and 1182–1202; these read AYWK…LLLM, LFSP…VFPL, IAGV…AGTL, AGLL…LLLL, IRLQ…ALVQ, and GLVG…SGLV. In terms of domain architecture, ABC transmembrane type-1 2 spans 885–1210; sequence ALAILFSLLL…LVSSFTQTEA (326 aa). Residues 1246 to 1479 enclose the ABC transporter 2 domain; it reads VEFQDVVLAY…PHSLFQQLLQ (234 aa). An ATP-binding site is contributed by 1280-1287; sequence GRTGSGKS.

The protein belongs to the ABC transporter superfamily. ABCC family. Conjugate transporter (TC 3.A.1.208) subfamily. In testis, localized to peritubular myoid cells, Leydig cells, along the basal membrane of Sertoli cells, moderately in the adluminal compartment of the seminiferous tubules, and in vascular endothelial cells. As to expression, specifically expressed in spleen. In terms of tissue distribution, widely expressed.

It is found in the cell membrane. Its subcellular location is the basolateral cell membrane. The protein localises to the basal cell membrane. It catalyses the reaction ATP + H2O + xenobioticSide 1 = ADP + phosphate + xenobioticSide 2.. It carries out the reaction an S-substituted glutathione(in) + ATP + H2O = an S-substituted glutathione(out) + ADP + phosphate + H(+). The catalysed reaction is 17beta-estradiol 17-O-(beta-D-glucuronate)(in) + ATP + H2O = 17beta-estradiol 17-O-(beta-D-glucuronate)(out) + ADP + phosphate + H(+). The enzyme catalyses leukotriene C4(in) + ATP + H2O = leukotriene C4(out) + ADP + phosphate + H(+). In terms of biological role, ATP-dependent transporter of the ATP-binding cassette (ABC) family that actively extrudes physiological compounds, and xenobiotics from cells. Lipophilic anion transporter that mediates ATP-dependent transport of glucuronide conjugates such as estradiol-17-beta-o-glucuronide and GSH conjugates such as leukotriene C4 (LTC4). May contribute to regulate the transport of organic compounds in testes across the blood-testis-barrier. Mediates multidrug resistance (MDR) in cancer cells by preventing the intracellular accumulation of certain antitumor drugs, such as, docetaxel and paclitaxel. Does not transport glycocholic acid, taurocholic acid, MTX, folic acid, cAMP, or cGMP. In Homo sapiens (Human), this protein is ATP-binding cassette sub-family C member 10 (ABCC10).